Consider the following 166-residue polypeptide: Myeloid-derived growth factor (166 aa).

An N-terminal signal peptide occupies residues 1–24; the sequence is MAAPSGGFWTAVVLAAAALKLAAA.

The protein belongs to the MYDGF family. As to expression, expressed in prostate, spleen and lung, and weakly expressed in the left ventricle (LF) and liver. Expressed predominantly in inflammatory cells, such as monocytes and macrophages, and weakly expressed in neutrophils, T-cells, B-cells, endothelial cells and cardiac myocytes, after myocardial infarction (MI) (at protein level).

The protein localises to the secreted. It localises to the endoplasmic reticulum-Golgi intermediate compartment. Its subcellular location is the endoplasmic reticulum. It is found in the golgi apparatus. Functionally, bone marrow-derived monocyte and paracrine-acting protein that promotes cardiac myocyte survival and adaptive angiogenesis for cardiac protection and/or repair after myocardial infarction (MI). Stimulates endothelial cell proliferation through a MAPK1/3-, STAT3- and CCND1-mediated signaling pathway. Inhibits cardiac myocyte apoptosis in a PI3K/AKT-dependent signaling pathway. The protein is Myeloid-derived growth factor of Mus musculus (Mouse).